We begin with the raw amino-acid sequence, 358 residues long: Neutral protease 2 homolog MGYG_02351 (358 aa).

A signal peptide spans 1-17; sequence MQFVALLAALGAPLALA. Positions 18 to 183 are excised as a propeptide; it reads ASIPAAHNNS…DSPAGVIDKR (166 aa). Intrachain disulfides connect Cys191–Cys260 and Cys267–Cys285. His309 contacts Zn(2+). The active site involves Glu310. Positions 313 and 324 each coordinate Zn(2+).

Belongs to the peptidase M35 family. Requires Zn(2+) as cofactor.

Its subcellular location is the secreted. It catalyses the reaction Preferential cleavage of bonds with hydrophobic residues in P1'. Also 3-Asn-|-Gln-4 and 8-Gly-|-Ser-9 bonds in insulin B chain.. Secreted metalloproteinase that allows assimilation of proteinaceous substrates. Shows high activities on basic nuclear substrates such as histone and protamine. May be involved in virulence. This chain is Neutral protease 2 homolog MGYG_02351, found in Arthroderma gypseum (strain ATCC MYA-4604 / CBS 118893) (Microsporum gypseum).